The sequence spans 445 residues: Phosphoglucosamine mutase (445 aa).

Serine 102 (phosphoserine intermediate) is an active-site residue. Serine 102, aspartate 241, aspartate 243, and aspartate 245 together coordinate Mg(2+). Position 102 is a phosphoserine (serine 102).

This sequence belongs to the phosphohexose mutase family. Requires Mg(2+) as cofactor. Activated by phosphorylation.

It catalyses the reaction alpha-D-glucosamine 1-phosphate = D-glucosamine 6-phosphate. Catalyzes the conversion of glucosamine-6-phosphate to glucosamine-1-phosphate. This Haemophilus influenzae (strain 86-028NP) protein is Phosphoglucosamine mutase.